The chain runs to 463 residues: MHEKLTTRFAPSPTGYLHIGGLRTALYNYLYARKNGGNFLLRIEDTDLKRNSKEATKAIIEAFKWCGLEHDGEVTYQSERFDLYKEYVKKLLDEGKAYYCYMSKEELEELRAKQEAAKERPRYDGRYREFTGTPPQGIEPVVRIKAPQSGEIVFEDGVKGEVRFKAEDIMDDFIIARSDGTPTYNFTVVIDDALMGVSDVIRGDDHLSNTPKQIVLYEALGFKIPKFFHVAMIHGEDGKKLSKRHGATDVMEYKEMGILPQALLNFLVRLGWSHGDDEVFSLEDLKKLFDPYHINKSASCYNAKKLEWLNAHYIKTLPFEEINRQLKDLGFDLSVYEKAGFLLDLLRERAKTLHDIINGAKSIVNAPQNYDENAVQKFVNENNLELLQAFANTLKDQKTGKDFEDFTNDFLEKKEAKLKDLAQPIRIALTGSAVSPSIFEVLEFLGVDECKKRIDNFLKVRGK.

Positions 11–21 (PSPTGYLHIGG) match the 'HIGH' region motif. The 'KMSKS' region signature appears at 240–244 (KLSKR). ATP is bound at residue Lys243.

Belongs to the class-I aminoacyl-tRNA synthetase family. Glutamate--tRNA ligase type 1 subfamily. As to quaternary structure, monomer.

The protein localises to the cytoplasm. The catalysed reaction is tRNA(Glu) + L-glutamate + ATP = L-glutamyl-tRNA(Glu) + AMP + diphosphate. Catalyzes the attachment of glutamate to tRNA(Glu) in a two-step reaction: glutamate is first activated by ATP to form Glu-AMP and then transferred to the acceptor end of tRNA(Glu). This Campylobacter jejuni subsp. jejuni serotype O:6 (strain 81116 / NCTC 11828) protein is Glutamate--tRNA ligase 2.